The following is a 350-amino-acid chain: Anthranilate phosphoribosyltransferase (350 aa).

5-phospho-alpha-D-ribose 1-diphosphate contacts are provided by residues Gly-88, 91–92, Thr-96, 98–101, 116–124, and Ser-128; these read GD, NIST, and KHGGRSVSS. Gly-88 is a binding site for anthranilate. Residue Ser-100 participates in Mg(2+) binding. Residue Arg-174 coordinates anthranilate. Asp-233 and Glu-234 together coordinate Mg(2+).

It belongs to the anthranilate phosphoribosyltransferase family. Homodimer. It depends on Mg(2+) as a cofactor.

It carries out the reaction N-(5-phospho-beta-D-ribosyl)anthranilate + diphosphate = 5-phospho-alpha-D-ribose 1-diphosphate + anthranilate. It functions in the pathway amino-acid biosynthesis; L-tryptophan biosynthesis; L-tryptophan from chorismate: step 2/5. Functionally, catalyzes the transfer of the phosphoribosyl group of 5-phosphorylribose-1-pyrophosphate (PRPP) to anthranilate to yield N-(5'-phosphoribosyl)-anthranilate (PRA). This is Anthranilate phosphoribosyltransferase from Albidiferax ferrireducens (strain ATCC BAA-621 / DSM 15236 / T118) (Rhodoferax ferrireducens).